A 580-amino-acid polypeptide reads, in one-letter code: Trafficking protein particle complex subunit 14 (580 aa).

2 disordered regions span residues 90 to 138 and 480 to 533; these read GMPG…ATTL and VSHP…RSGS. Gly residues predominate over residues 105-116; that stretch reads PGGGDPGGGGLF. The span at 124 to 137 shows a compositional bias: low complexity; that stretch reads THGPGPATSGGATT. Position 491 is a phosphoserine (serine 491). The span at 492-502 shows a compositional bias: low complexity; that stretch reads RKSSPSSPAVR. Residues 512-525 show a composition bias toward polar residues; it reads LGRSQSFSHQQPSR. The residue at position 517 (serine 517) is a Phosphoserine. At threonine 541 the chain carries Phosphothreonine. Position 546 is a phosphoserine (serine 546).

In terms of assembly, component of the multisubunit TRAPP II complex, which includes at least TRAPPC1, TRAPPC2, TRAPPC2L, TRAPPC3, TRAPPC4, TRAPPC5, TRAPPC6A/B, TRAPPC9, TRAPPC10 and TRAPPC14. TRAPPC9, TRAPPC10 and TRAPPC14 are specific subunits of the TRAPP II complex. Interacts with alpha-tubulin during mitosis. Interacts with RAB3IP (via the N-terminal region); this interaction mediates RAB3IP association with the TRAPP II complex. Interacts with TRAPPC10. Interacts with FBF1. Broadly expressed. High levels in brain, cerebellum, testis and whole blood.

The protein localises to the cytoplasm. Its subcellular location is the cytoskeleton. The protein resides in the spindle. It is found in the vesicle. It localises to the midbody. Its function is as follows. Specific subunit of the TRAPP (transport protein particle) II complex, a highly conserved vesicle tethering complex that functions in late Golgi trafficking as a membrane tether. TRAPP II complex also has GEF activity toward RAB1A. TRAPPC14 is dispensable for TRAPPII complex integrity but mediates RAB3IP preciliary vesicle trafficking to the mother centriole during ciliogenesis. Modulates YAP1 activity as transcriptional regulator. This is Trafficking protein particle complex subunit 14 from Homo sapiens (Human).